The chain runs to 264 residues: Meiotically up-regulated gene 162 protein (264 aa).

Transmembrane regions (helical) follow at residues 18 to 38 (IVIF…WNLK), 54 to 74 (LWIY…AGSA), 84 to 104 (VFQV…GYSF), 140 to 160 (IISI…LLFL), 174 to 194 (HLSY…IKLI), 199 to 219 (FVLG…SLIT), and 223 to 243 (LISY…IWIY).

The protein resides in the endoplasmic reticulum membrane. Functionally, has a role in meiosis. This chain is Meiotically up-regulated gene 162 protein (mug162), found in Schizosaccharomyces pombe (strain 972 / ATCC 24843) (Fission yeast).